The following is a 49-amino-acid chain: Large ribosomal subunit protein bL33 (49 aa).

Belongs to the bacterial ribosomal protein bL33 family.

The polypeptide is Large ribosomal subunit protein bL33 (Clostridium perfringens (strain ATCC 13124 / DSM 756 / JCM 1290 / NCIMB 6125 / NCTC 8237 / Type A)).